Reading from the N-terminus, the 1229-residue chain is Alpha,alpha-trehalose-phosphate synthase [UDP-forming] 2 (1229 aa).

Residues 196–233 (VSSDSEGEEAIHNVRSGTHTESESEEDPKAPRSGLATS) are disordered. Basic and acidic residues predominate over residues 213–225 (THTESESEEDPKA).

In the N-terminal section; belongs to the glycosyltransferase 20 family. This sequence in the C-terminal section; belongs to the gob-1 trehalose phosphatase family.

It carries out the reaction D-glucose 6-phosphate + UDP-alpha-D-glucose = alpha,alpha-trehalose 6-phosphate + UDP + H(+). Its function is as follows. Catalyzes the production of trehalose from glucose-6-phosphate and UDP-alpha-D-glucose in a 2 step process. This Caenorhabditis elegans protein is Alpha,alpha-trehalose-phosphate synthase [UDP-forming] 2 (tps-2).